The sequence spans 426 residues: DUF724 domain-containing protein 9 (426 aa).

Composition is skewed to polar residues over residues 164-184 and 213-222; these read ESSL…NANE and PRNQNASVND. A disordered region spans residues 164–248; it reads ESSLTQGSGD…REESLCSDAS (85 aa). The segment covering 223-242 has biased composition (basic and acidic residues); it reads STRENENSEDINRKRKREES. A DUF724 domain is found at 256 to 425; the sequence is LPFEKKLSIW…LQFQTTASAP (170 aa). Positions 370–402 form a coiled coil; that stretch reads AEKESIKIENERKILELQRLNEEVDKEIAQSKS.

Expressed in flowers.

It is found in the nucleus. Functionally, may be involved in the polar growth of plant cells via transportation of RNAs. This chain is DUF724 domain-containing protein 9, found in Arabidopsis thaliana (Mouse-ear cress).